Consider the following 170-residue polypeptide: Thialysine N-epsilon-acetyltransferase (170 aa).

The region spanning 4 to 166 is the N-acetyltransferase domain; the sequence is VLIREAKEGD…FRFEGEAMRE (163 aa). Residue 27–28 participates in substrate binding; it reads YE. K29 carries the post-translational modification N6-acetyllysine. E92 is a substrate binding site. Acetyl-CoA-binding positions include 94–96, 102–107, 133–135, and Y140; these read IYV, GQGIGS, and NKK. Residue Y140 is the Proton donor of the active site. Residue E152 participates in substrate binding.

The protein belongs to the acetyltransferase family. As to quaternary structure, homodimer.

The protein resides in the cytoplasm. It carries out the reaction S-(2-aminoethyl)-L-cysteine + acetyl-CoA = S-(2-acetamidoethyl)-L-cysteine + CoA + H(+). The enzyme catalyses an alkane-alpha,omega-diamine + acetyl-CoA = an N-acetylalkane-alpha,omega-diamine + CoA + H(+). In terms of biological role, catalyzes the N-acetylation of the amino acid thialysine (S-(2-aminoethyl)-L-cysteine), a L-lysine analog with the 4-methylene group substituted with a sulfur. May also catalyze acetylation of polyamines, such as norspermidine, spermidine or spermine. However, ability to acetylate polyamines is weak, suggesting that it does not act as a diamine acetyltransferase in vivo. This chain is Thialysine N-epsilon-acetyltransferase, found in Sus scrofa (Pig).